The following is an 875-amino-acid chain: Alanine--tRNA ligase (875 aa).

4 residues coordinate Zn(2+): His564, His568, Cys666, and His670.

Belongs to the class-II aminoacyl-tRNA synthetase family. As to quaternary structure, homotetramer. The cofactor is Zn(2+).

The protein resides in the cytoplasm. It carries out the reaction tRNA(Ala) + L-alanine + ATP = L-alanyl-tRNA(Ala) + AMP + diphosphate. Catalyzes the attachment of alanine to tRNA(Ala) in a two-step reaction: alanine is first activated by ATP to form Ala-AMP and then transferred to the acceptor end of tRNA(Ala). Also edits incorrectly charged Ser-tRNA(Ala) and Gly-tRNA(Ala) via its editing domain. In Sodalis glossinidius (strain morsitans), this protein is Alanine--tRNA ligase.